A 607-amino-acid polypeptide reads, in one-letter code: MENPPNETEAKQIQTNEGKKTKGGIITMPFIIANEAFEKVASYGLLPNMIMYLIRDYRFGVAKGTNVLFMWSAASNFTPLLGAFLSDSYLGRFLTISIASLSSFLGMVLLWLTAMLPQVKPSPCDPTAAGSHCGSSTASQLALLYSAFALISIGSGGIRPCSLAFGADQLDNKENPKNERVLESFFGWYYASSAVAVLIAFTGIVYIQEHLGWKIGFGVPAVLMLIAALLFILASPLYVTRGVTKSLFTGLAQAIVAAYKKRKLSLPDHHDSFDCYYHMKDSEIKAPSQKLRFLNKACLISNREEEIGSDGFALNPWRLCTTDKVEELKALIKVIPIWSTGIMMSINTSQSSFQLLQATSMDRRLSRHGSSFQVPAGSFGMFTIIALALWVILYDRAVIPLASKIRGRPFRLSVKLRMGLGLFMSFLAMAISAMVESFRRKKAISQGYANNSNAVVDISAMWLVPQYVLHGLAEALTAIGQTEFFYTEFPKSMSSIAASLFGLGMAVASLLASVVLNAVNELTSRNGKESWVSDNINKGHYNYYYWVLAIMSFINVIYYVICSWSYGPLVDQVRNGRVNGVREEEELIDIVGKGFEKEDLSPVVKTN.

Helical transmembrane passes span 65–85, 96–116, 138–158, 185–205, 215–235, 374–394, 418–438, 460–480, 496–516, and 544–564; these read TNVL…GAFL, ISIA…TAML, ASQL…SGGI, FFGW…TGIV, IGFG…ILAS, VPAG…VILY, MGLG…VESF, AMWL…TAIG, IAAS…SVVL, and YYWV…ICSW. A Phosphoserine modification is found at Ser601.

The protein belongs to the major facilitator superfamily. Proton-dependent oligopeptide transporter (POT/PTR) (TC 2.A.17) family. In terms of tissue distribution, expressed in shoots, stems, leaves, flowers and siliques. Mainly detected in larger expanded leaves, in the companion cells of major veins.

The protein resides in the cell membrane. Functionally, low-affinity nitrate transporter involved in xylem-to-phloem transfer for redistributing nitrate into developing leaves. Not involved in dipeptides transport. This chain is Protein NRT1/ PTR FAMILY 1.2 (NPF1.2), found in Arabidopsis thaliana (Mouse-ear cress).